We begin with the raw amino-acid sequence, 176 residues long: Zinc finger protein 428 (176 aa).

The disordered stretch occupies residues 1–152 (MTETREPTET…EEEGGTYHCT (152 aa)). The segment covering 16 to 46 (LEEDDEDLSPEPDSEEEEEEEEEETTDDPEY) has biased composition (acidic residues). Threonine 96 is modified (phosphothreonine). A compositionally biased stretch (basic and acidic residues) spans 126-138 (PSRTGETRPAGRD). The segment at 149-171 (YHCTECEDSFDNLGELHGHFMLH) adopts a C2H2-type zinc-finger fold.

The protein is Zinc finger protein 428 (Znf428) of Mus musculus (Mouse).